Here is a 306-residue protein sequence, read N- to C-terminus: 3-methyl-2-oxobutanoate hydroxymethyltransferase (306 aa).

Residues aspartate 53 and aspartate 96 each contribute to the Mg(2+) site. 3-methyl-2-oxobutanoate-binding positions include 53-54 (DS), aspartate 96, and lysine 126. Glutamate 128 lines the Mg(2+) pocket. Glutamate 195 serves as the catalytic Proton acceptor.

It belongs to the PanB family. As to quaternary structure, homodecamer; pentamer of dimers. It depends on Mg(2+) as a cofactor.

It localises to the cytoplasm. The catalysed reaction is 3-methyl-2-oxobutanoate + (6R)-5,10-methylene-5,6,7,8-tetrahydrofolate + H2O = 2-dehydropantoate + (6S)-5,6,7,8-tetrahydrofolate. It participates in cofactor biosynthesis; (R)-pantothenate biosynthesis; (R)-pantoate from 3-methyl-2-oxobutanoate: step 1/2. Its function is as follows. Catalyzes the reversible reaction in which hydroxymethyl group from 5,10-methylenetetrahydrofolate is transferred onto alpha-ketoisovalerate to form ketopantoate. The chain is 3-methyl-2-oxobutanoate hydroxymethyltransferase from Anaeromyxobacter sp. (strain K).